A 240-amino-acid polypeptide reads, in one-letter code: Probable transcriptional regulatory protein HPAG1_0159 (240 aa).

Belongs to the TACO1 family.

It localises to the cytoplasm. The chain is Probable transcriptional regulatory protein HPAG1_0159 from Helicobacter pylori (strain HPAG1).